Consider the following 411-residue polypeptide: Tyrosine--tRNA ligase (411 aa).

Tyr-36 is a binding site for L-tyrosine. The 'HIGH' region signature appears at 41–50 (PTADSLHVGH). Residues Tyr-172 and Gln-176 each contribute to the L-tyrosine site. Residues 232 to 236 (KMGKT) carry the 'KMSKS' region motif. Residue Lys-235 participates in ATP binding. In terms of domain architecture, S4 RNA-binding spans 344–409 (YSIANILVVT…GKKNHIKVII (66 aa)).

Belongs to the class-I aminoacyl-tRNA synthetase family. TyrS type 1 subfamily. As to quaternary structure, homodimer.

Its subcellular location is the cytoplasm. The enzyme catalyses tRNA(Tyr) + L-tyrosine + ATP = L-tyrosyl-tRNA(Tyr) + AMP + diphosphate + H(+). Its function is as follows. Catalyzes the attachment of tyrosine to tRNA(Tyr) in a two-step reaction: tyrosine is first activated by ATP to form Tyr-AMP and then transferred to the acceptor end of tRNA(Tyr). In Malacoplasma penetrans (strain HF-2) (Mycoplasma penetrans), this protein is Tyrosine--tRNA ligase.